The sequence spans 404 residues: Probable ketol-acid reductoisomerase, mitochondrial (404 aa).

Positions 63–253 constitute a KARI N-terminal Rossmann domain; sequence TKENVWERSD…AVGSGFIYQT (191 aa). NADP(+) is bound by residues 91-100, 115-120, and 153-157; these read GYGSQGHGQG, RKDGAS, and SDAAQ. His-178 is a catalytic residue. The 148-residue stretch at 254–401 folds into the KARI C-terminal knotted domain; sequence TFKKEVISDL…EVVRSLRPEH (148 aa). Phosphoserine is present on Ser-261. Residues Asp-262, Glu-266, Glu-298, and Glu-302 each contribute to the Mg(2+) site. Ser-324 provides a ligand contact to substrate.

The protein belongs to the ketol-acid reductoisomerase family. The cofactor is Mg(2+).

The protein localises to the mitochondrion. The enzyme catalyses (2R)-2,3-dihydroxy-3-methylbutanoate + NADP(+) = (2S)-2-acetolactate + NADPH + H(+). The catalysed reaction is (2R,3R)-2,3-dihydroxy-3-methylpentanoate + NADP(+) = (S)-2-ethyl-2-hydroxy-3-oxobutanoate + NADPH + H(+). It functions in the pathway amino-acid biosynthesis; L-isoleucine biosynthesis; L-isoleucine from 2-oxobutanoate: step 2/4. The protein operates within amino-acid biosynthesis; L-valine biosynthesis; L-valine from pyruvate: step 2/4. This Schizosaccharomyces pombe (strain 972 / ATCC 24843) (Fission yeast) protein is Probable ketol-acid reductoisomerase, mitochondrial (ilv5).